We begin with the raw amino-acid sequence, 1053 residues long: Protein CLEC16A (1053 aa).

One can recognise an FPL domain in the interval 51–198 (IRSITEILIW…AVRTITLNVY (148 aa)). Disordered regions lie at residues 375-434 (SLEM…GESE), 452-471 (STSV…AATC), and 892-983 (SSPS…SPSL). Positions 381–392 (HKGKRRVQKRPN) are enriched in basic residues. Over residues 892–938 (SSPSLSSQSPPSASGSPSGSGSTSHCDSGGTSSSSTPSTAQSPADAP) the composition is skewed to low complexity.

The protein belongs to the CLEC16A/gop-1 family. As to quaternary structure, interacts with RNF41/NRDP1. As to expression, almost exclusively expressed in immune cells, including dendritic cells, B-lymphocytes and natural killer cells.

It is found in the endosome membrane. It localises to the lysosome membrane. In terms of biological role, regulator of mitophagy through the upstream regulation of the RNF41/NRDP1-PRKN pathway. Mitophagy is a selective form of autophagy necessary for mitochondrial quality control. The RNF41/NRDP1-PRKN pathway regulates autophagosome-lysosome fusion during late mitophagy. May protect RNF41/NRDP1 from proteasomal degradation, RNF41/NRDP1 which regulates proteasomal degradation of PRKN. Plays a key role in beta cells functions by regulating mitophagy/autophagy and mitochondrial health. The protein is Protein CLEC16A of Homo sapiens (Human).